Consider the following 327-residue polypeptide: AA9 family lytic polysaccharide monooxygenase B (327 aa).

The N-terminal stretch at 1–19 (MKSFTATALAALLAQQAAA) is a signal peptide. The Cu(2+) site is built by histidine 20 and histidine 98. Cysteine 68 and cysteine 192 are oxidised to a cystine. Positions 178 and 187 each coordinate O2. Tyrosine 189 lines the Cu(2+) pocket. Positions 264-280 (SPTTSLTPPVSTSTPAP) are enriched in low complexity. A disordered region spans residues 264-284 (SPTTSLTPPVSTSTPAPGNGG). The 37-residue stretch at 291–327 (CTVQKYGQCGGQGYTGCTTCAAGSTCNTTNQWYHQCV) folds into the CBM1 domain. N-linked (GlcNAc...) asparagine glycosylation occurs at asparagine 317.

This sequence belongs to the polysaccharide monooxygenase AA9 family. Cu(2+) serves as cofactor.

The protein localises to the secreted. The catalysed reaction is [(1-&gt;4)-beta-D-glucosyl]n+m + reduced acceptor + O2 = 4-dehydro-beta-D-glucosyl-[(1-&gt;4)-beta-D-glucosyl]n-1 + [(1-&gt;4)-beta-D-glucosyl]m + acceptor + H2O.. Functionally, lytic polysaccharide monooxygenase (LPMO) that depolymerizes crystalline and amorphous polysaccharides via the oxidation of scissile alpha- or beta-(1-4)-glycosidic bonds, yielding C1 or C4 oxidation products. Catalysis by LPMOs requires the reduction of the active-site copper from Cu(II) to Cu(I) by a reducing agent and H(2)O(2) or O(2) as a cosubstrate. The protein is AA9 family lytic polysaccharide monooxygenase B (LPMO9B) of Podospora anserina (strain S / ATCC MYA-4624 / DSM 980 / FGSC 10383) (Pleurage anserina).